The chain runs to 201 residues: MAEPGFFNAMLIGALIFGYVLGSIPFGLILTRLAGLGDVRAIGSGNIGATNVLRTGNKKLAAATLILDALKGTAAALIAAHFGQNAAIAAGFGAFIGHLFPVWIGFKGGKGVATYLGVLIGLAWAGALVFAAAWIVTALLTRYSSLSALVASLVVPIALYSRGNQALAALFAIMTVIVFIKHRANISRLLNGTESKIGAKG.

A run of 6 helical transmembrane segments spans residues 10 to 30, 60 to 80, 86 to 106, 116 to 136, 139 to 159, and 166 to 186; these read MLIG…GLIL, LAAA…LIAA, AAIA…WIGF, LGVL…AWIV, LLTR…PIAL, and ALAA…RANI.

The protein belongs to the PlsY family. In terms of assembly, probably interacts with PlsX.

It localises to the cell inner membrane. The catalysed reaction is an acyl phosphate + sn-glycerol 3-phosphate = a 1-acyl-sn-glycero-3-phosphate + phosphate. It participates in lipid metabolism; phospholipid metabolism. Catalyzes the transfer of an acyl group from acyl-phosphate (acyl-PO(4)) to glycerol-3-phosphate (G3P) to form lysophosphatidic acid (LPA). This enzyme utilizes acyl-phosphate as fatty acyl donor, but not acyl-CoA or acyl-ACP. This chain is Glycerol-3-phosphate acyltransferase, found in Brucella ovis (strain ATCC 25840 / 63/290 / NCTC 10512).